The sequence spans 361 residues: Glutaminyl-peptide cyclotransferase (361 aa).

An N-terminal signal peptide occupies residues 1 to 28 (MAGGRHRRVVGTLHLLLLVAALPWASRG). Asn-49 carries N-linked (GlcNAc...) asparagine glycosylation. The cysteines at positions 139 and 164 are disulfide-linked. Position 159 (Asp-159) interacts with Zn(2+). Glu-201 (proton acceptor) is an active-site residue. Position 202 (Glu-202) interacts with Zn(2+). Catalysis depends on Asp-248, which acts as the Proton acceptor. Asn-296 is a glycosylation site (N-linked (GlcNAc...) asparagine). Position 330 (His-330) interacts with Zn(2+).

It belongs to the glutaminyl-peptide cyclotransferase family.

Its subcellular location is the secreted. It carries out the reaction N-terminal L-glutaminyl-[peptide] = N-terminal 5-oxo-L-prolyl-[peptide] + NH4(+). In terms of biological role, responsible for the biosynthesis of pyroglutamyl peptides. Has a bias against acidic and tryptophan residues adjacent to the N-terminal glutaminyl residue and a lack of importance of chain length after the second residue. Also catalyzes N-terminal pyroglutamate formation. In vitro, catalyzes pyroglutamate formation of N-terminally truncated form of APP amyloid-beta peptides [Glu-3]-amyloid-beta. May be involved in the N-terminal pyroglutamate formation of several amyloid-related plaque-forming peptides. In Homo sapiens (Human), this protein is Glutaminyl-peptide cyclotransferase (QPCT).